The chain runs to 574 residues: Protein misato (574 aa).

The protein belongs to the misato family.

It localises to the mitochondrion. The chain is Protein misato (mst) from Drosophila melanogaster (Fruit fly).